Here is a 461-residue protein sequence, read N- to C-terminus: Cysteine--tRNA ligase (461 aa).

Residue C28 participates in Zn(2+) binding. The 'HIGH' region motif lies at 30–40 (ITVYDLCHIGH). Positions 209, 234, and 238 each coordinate Zn(2+). A 'KMSKS' region motif is present at residues 266-270 (KMSKS). K269 contacts ATP.

Belongs to the class-I aminoacyl-tRNA synthetase family. As to quaternary structure, monomer. Zn(2+) is required as a cofactor.

The protein resides in the cytoplasm. It carries out the reaction tRNA(Cys) + L-cysteine + ATP = L-cysteinyl-tRNA(Cys) + AMP + diphosphate. The protein is Cysteine--tRNA ligase of Escherichia coli (strain 55989 / EAEC).